The following is an 84-amino-acid chain: Cell division topological specificity factor (84 aa).

Belongs to the MinE family.

Prevents the cell division inhibition by proteins MinC and MinD at internal division sites while permitting inhibition at polar sites. This ensures cell division at the proper site by restricting the formation of a division septum at the midpoint of the long axis of the cell. In Rhodopseudomonas palustris (strain BisA53), this protein is Cell division topological specificity factor.